The chain runs to 125 residues: UPF0251 protein Dhaf_1981 (125 aa).

Belongs to the UPF0251 family.

This is UPF0251 protein Dhaf_1981 from Desulfitobacterium hafniense (strain DSM 10664 / DCB-2).